The sequence spans 585 residues: Pyruvate kinase (585 aa).

Substrate is bound at residue Arg-32. Asn-34, Ser-36, Asp-66, and Thr-67 together coordinate K(+). ATP is bound at residue 34–37 (NFSH). Residues Arg-73 and Lys-156 each coordinate ATP. Residue Glu-221 coordinates Mg(2+). Residues Gly-244, Asp-245, and Thr-277 each coordinate substrate. Position 245 (Asp-245) interacts with Mg(2+).

It belongs to the pyruvate kinase family. This sequence in the C-terminal section; belongs to the PEP-utilizing enzyme family. It depends on Mg(2+) as a cofactor. The cofactor is K(+).

The enzyme catalyses pyruvate + ATP = phosphoenolpyruvate + ADP + H(+). It participates in carbohydrate degradation; glycolysis; pyruvate from D-glyceraldehyde 3-phosphate: step 5/5. The chain is Pyruvate kinase (pyk) from Staphylococcus aureus (strain bovine RF122 / ET3-1).